Consider the following 403-residue polypeptide: Flavohemoprotein (403 aa).

The Globin domain occupies 1–138 (MLTQKTKDIV…LADVLMGMES (138 aa)). Heme b is bound at residue His85. Active-site charge relay system residues include Tyr95 and Glu137. The interval 149 to 403 (GGWKGWRTFV…EVFGPDLFAE (255 aa)) is reductase. The FAD-binding FR-type domain occupies 152-262 (KGWRTFVIRE…AAPYGSFHID (111 aa)). FAD is bound by residues Tyr190 and 206–209 (RQYS). An NADP(+)-binding site is contributed by 275 to 280 (GVGLTP). 395–398 (VFGP) serves as a coordination point for FAD.

It belongs to the globin family. Two-domain flavohemoproteins subfamily. The protein in the C-terminal section; belongs to the flavoprotein pyridine nucleotide cytochrome reductase family. In terms of assembly, monomer. The cofactor is FAD. It depends on heme b as a cofactor.

It is found in the cytoplasm. It carries out the reaction 2 nitric oxide + NADPH + 2 O2 = 2 nitrate + NADP(+) + H(+). It catalyses the reaction 2 nitric oxide + NADH + 2 O2 = 2 nitrate + NAD(+) + H(+). Functionally, is involved in NO detoxification in an aerobic process, termed nitric oxide dioxygenase (NOD) reaction that utilizes O(2) and NAD(P)H to convert NO to nitrate, which protects the bacterium from various noxious nitrogen compounds. Therefore, plays a central role in the inducible response to nitrosative stress. In the presence of oxygen and NADH, FHP has NADH oxidase activity, which leads to the generation of superoxide and H(2)O(2), both in vitro and in vivo, and it has been suggested that FHP might act as an amplifier of superoxide stress. Under anaerobic conditions, FHP also exhibits nitric oxide reductase and FAD reductase activities. However, all these reactions are much lower than NOD activity. In Cupriavidus necator (strain ATCC 17699 / DSM 428 / KCTC 22496 / NCIMB 10442 / H16 / Stanier 337) (Ralstonia eutropha), this protein is Flavohemoprotein (hmp).